The sequence spans 64 residues: Small ribosomal subunit protein bS21 (64 aa).

Belongs to the bacterial ribosomal protein bS21 family.

This chain is Small ribosomal subunit protein bS21, found in Amoebophilus asiaticus (strain 5a2).